The chain runs to 412 residues: Inositol polyphosphate-5-phosphatase A (412 aa).

Cys-409 carries S-farnesyl cysteine lipidation. The propeptide at 410 to 412 (VVQ) is removed in mature form.

It belongs to the inositol 1,4,5-trisphosphate 5-phosphatase type I family. In terms of assembly, interacts with TASOR. Post-translationally, isoprenylation at Cys-409 is required for localization at the membrane.

The protein resides in the cell membrane. It localises to the cell projection. It is found in the dendrite. The enzyme catalyses 1D-myo-inositol 1,4,5-trisphosphate + H2O = 1D-myo-inositol 1,4-bisphosphate + phosphate. It carries out the reaction 1D-myo-inositol 1,3,4,5-tetrakisphosphate + H2O = 1D-myo-inositol 1,3,4-trisphosphate + phosphate. With respect to regulation, inhibited by EDTA and 2,3-bisphosphoglycerate. Phosphatase that specifically hydrolyzes the 5-phosphate of inositol 1,4,5-trisphosphate to inositol 1,4-bisphosphate, and inositol 1,3,4,5-tetrasphosphate to inositol 1,3,4-trisphosphate. Plays a crucial role in the survival of cerebellar Purkinje cells. The protein is Inositol polyphosphate-5-phosphatase A (INPP5A) of Canis lupus familiaris (Dog).